Here is a 376-residue protein sequence, read N- to C-terminus: Chaperone protein DnaJ (376 aa).

The J domain maps to 5–70 (DFYEVLGVER…SKRAAYDQYG (66 aa)). The segment at 135 to 213 (GTTVTIRVPT…CHGQGRVEEQ (79 aa)) adopts a CR-type zinc-finger fold. Zn(2+)-binding residues include C148, C151, C165, C168, C187, C190, C201, and C204. CXXCXGXG motif repeat units follow at residues 148-155 (CKTCDGSG), 165-172 (CTTCGGIG), 187-194 (CPRCHGSG), and 201-208 (CGSCHGQG).

This sequence belongs to the DnaJ family. Homodimer. Zn(2+) is required as a cofactor.

Its subcellular location is the cytoplasm. Participates actively in the response to hyperosmotic and heat shock by preventing the aggregation of stress-denatured proteins and by disaggregating proteins, also in an autonomous, DnaK-independent fashion. Unfolded proteins bind initially to DnaJ; upon interaction with the DnaJ-bound protein, DnaK hydrolyzes its bound ATP, resulting in the formation of a stable complex. GrpE releases ADP from DnaK; ATP binding to DnaK triggers the release of the substrate protein, thus completing the reaction cycle. Several rounds of ATP-dependent interactions between DnaJ, DnaK and GrpE are required for fully efficient folding. Also involved, together with DnaK and GrpE, in the DNA replication of plasmids through activation of initiation proteins. This chain is Chaperone protein DnaJ, found in Stutzerimonas stutzeri (Pseudomonas stutzeri).